We begin with the raw amino-acid sequence, 249 residues long: MSGHSKWATIKRKKDAIDSKRGAIFTRVGKEITVAAKMGGGDPEGNPRLRLAILKAKSVNMPKDNIERAIKKGTGELEGVVYEECLYECFGPAGIAIMVSAVTDKKSRTTPEIKSILTKLGGSLATSGSVSRLFEKKGVIVLESSQIGEDKLVDLAVGEGAEDVINEGEVYRVITTPDDYESVLHALNEKGLKSEESEIRYIALISSEIADKEVAKKVMKLIEQLDGHDDVTSVTSNFELAASLEKEFE.

It belongs to the TACO1 family.

The protein resides in the cytoplasm. The polypeptide is Probable transcriptional regulatory protein LBL_2537 (Leptospira borgpetersenii serovar Hardjo-bovis (strain L550)).